We begin with the raw amino-acid sequence, 1099 residues long: Carbamoyl phosphate synthase large chain (1099 aa).

Residues 1–402 (MPKREDIKRI…ALGKALRSLE (402 aa)) form a carboxyphosphate synthetic domain region. ATP contacts are provided by Arg129, Arg169, Gly175, Gly176, Glu208, Val210, Glu215, Gly241, Ile242, His243, Gln285, and Glu299. The region spanning 133–328 (KETMEKAGLE…IAKVAALLAV (196 aa)) is the ATP-grasp 1 domain. 3 residues coordinate Mg(2+): Gln285, Glu299, and Asn301. Gln285, Glu299, and Asn301 together coordinate Mn(2+). The segment at 403-541 (LDAAPKLDLE…STYNGVENEA (139 aa)) is oligomerization domain. The segment at 542 to 944 (VPSDREKIMI…AFAKAQIAAG (403 aa)) is carbamoyl phosphate synthetic domain. Positions 666–857 (AKLLKQIGLK…VARIAAKIMV (192 aa)) constitute an ATP-grasp 2 domain. Residues Arg702, Lys741, Leu743, Glu748, Gly773, Val774, His775, Ser776, Gln816, and Glu828 each contribute to the ATP site. The Mg(2+) site is built by Gln816, Glu828, and Asn830. Mn(2+)-binding residues include Gln816, Glu828, and Asn830. One can recognise an MGS-like domain in the interval 945–1099 (NPLPTTGAIL…VRRLTDTWKM (155 aa)). The tract at residues 945-1099 (NPLPTTGAIL…VRRLTDTWKM (155 aa)) is allosteric domain.

The protein belongs to the CarB family. In terms of assembly, composed of two chains; the small (or glutamine) chain promotes the hydrolysis of glutamine to ammonia, which is used by the large (or ammonia) chain to synthesize carbamoyl phosphate. Tetramer of heterodimers (alpha,beta)4. Mg(2+) is required as a cofactor. Mn(2+) serves as cofactor.

It carries out the reaction hydrogencarbonate + L-glutamine + 2 ATP + H2O = carbamoyl phosphate + L-glutamate + 2 ADP + phosphate + 2 H(+). The enzyme catalyses hydrogencarbonate + NH4(+) + 2 ATP = carbamoyl phosphate + 2 ADP + phosphate + 2 H(+). The protein operates within amino-acid biosynthesis; L-arginine biosynthesis; carbamoyl phosphate from bicarbonate: step 1/1. It participates in pyrimidine metabolism; UMP biosynthesis via de novo pathway; (S)-dihydroorotate from bicarbonate: step 1/3. Large subunit of the glutamine-dependent carbamoyl phosphate synthetase (CPSase). CPSase catalyzes the formation of carbamoyl phosphate from the ammonia moiety of glutamine, carbonate, and phosphate donated by ATP, constituting the first step of 2 biosynthetic pathways, one leading to arginine and/or urea and the other to pyrimidine nucleotides. The large subunit (synthetase) binds the substrates ammonia (free or transferred from glutamine from the small subunit), hydrogencarbonate and ATP and carries out an ATP-coupled ligase reaction, activating hydrogencarbonate by forming carboxy phosphate which reacts with ammonia to form carbamoyl phosphate. The sequence is that of Carbamoyl phosphate synthase large chain from Thermotoga sp. (strain RQ2).